The sequence spans 389 residues: Nicotinate phosphoribosyltransferase (389 aa).

H211 is subject to Phosphohistidine; by autocatalysis.

It belongs to the NAPRTase family. Post-translationally, transiently phosphorylated on a His residue during the reaction cycle. Phosphorylation strongly increases the affinity for substrates and increases the rate of nicotinate D-ribonucleotide production. Dephosphorylation regenerates the low-affinity form of the enzyme, leading to product release.

The enzyme catalyses nicotinate + 5-phospho-alpha-D-ribose 1-diphosphate + ATP + H2O = nicotinate beta-D-ribonucleotide + ADP + phosphate + diphosphate. Its pathway is cofactor biosynthesis; NAD(+) biosynthesis; nicotinate D-ribonucleotide from nicotinate: step 1/1. Its function is as follows. Catalyzes the synthesis of beta-nicotinate D-ribonucleotide from nicotinate and 5-phospho-D-ribose 1-phosphate at the expense of ATP. The polypeptide is Nicotinate phosphoribosyltransferase (Desulforapulum autotrophicum (strain ATCC 43914 / DSM 3382 / VKM B-1955 / HRM2) (Desulfobacterium autotrophicum)).